Consider the following 484-residue polypeptide: MGAFLDKPKTEKHNAHGAGNGLRYGLSSMQGWRVEMEDAHTAVVGIPHGLEDWSFFAVYDGHAGSRVANYCSTHLLEHITNNEDFRAAGKSGSALEPSVENVKNGIRTGFLKIDEYMRNFSDLRNGMDRSGSTAVGVMISPKHIYFINCGDSRAVLYRSGQVCFSTQDHKPCNPREKERIQNAGGSVMIQRVNGSLAVSRALGDYDYKCVDGKGPTEQLVSPEPEVYEILRAEEDEFIILACDGIWDVMSNEELCEFVKSRLEVSDDLENVCNWVVDTCLHKGSRDNMSIVLVCFSNAPKVSDEAMRKDSELDKYLESRVEEIMEKSGEEGMPDLAHVMRILSAENIPNLPPGGGLAGNIIFFRRHVIEAVYSRLNPHRESDGASDEAEESGSQGKLVEALRQMRINHRGNYRQLLEEMLTSYRLAKVEGEENPAEQAATAASSNSDAGNTVAMQESHTESKSDLAELDSCTEDAGTKMSGEKL.

Over residues 1 to 14 (MGAFLDKPKTEKHN) the composition is skewed to basic and acidic residues. Residues 1–20 (MGAFLDKPKTEKHNAHGAGN) are disordered. A lipid anchor (N-myristoyl glycine) is attached at Gly2. A Glycyl lysine isopeptide (Lys-Gly) (interchain with G-Cter in ISG15) cross-link involves residue Lys12. The PPM-type phosphatase domain occupies 23–295 (RYGLSSMQGW…DNMSIVLVCF (273 aa)). Residues Asp60 and Gly61 each contribute to the Mn(2+) site. Lys142 participates in a covalent cross-link: Glycyl lysine isopeptide (Lys-Gly) (interchain with G-Cter in ISG15). Residues Asp243 and Asp286 each coordinate Mn(2+). Ser391 bears the Phosphoserine mark. The tract at residues 431–484 (EENPAEQAATAASSNSDAGNTVAMQESHTESKSDLAELDSCTEDAGTKMSGEKL) is disordered. Residues 440-456 (TAASSNSDAGNTVAMQE) show a composition bias toward polar residues.

This sequence belongs to the PP2C family. In terms of assembly, monomer. Interacts with PAK6. Interacts with the phosphorylated form of IKBKB/IKKB. Mg(2+) serves as cofactor. Requires Mn(2+) as cofactor. Post-translationally, isgylation negatively regulates its activity. N-myristoylation is essential for the recognition of its substrates for dephosphorylation.

It is found in the cytoplasm. Its subcellular location is the cytosol. The protein localises to the membrane. It catalyses the reaction O-phospho-L-seryl-[protein] + H2O = L-seryl-[protein] + phosphate. It carries out the reaction O-phospho-L-threonyl-[protein] + H2O = L-threonyl-[protein] + phosphate. Functionally, enzyme with a broad specificity. Dephosphorylates PRKAA1 and PRKAA2. Inhibits TBK1-mediated antiviral signaling by dephosphorylating it at 'Ser-172'. Plays an important role in the termination of TNF-alpha-mediated NF-kappa-B activation through dephosphorylating and inactivating IKBKB/IKKB. This Bos taurus (Bovine) protein is Protein phosphatase 1B (PPM1B).